The chain runs to 97 residues: UPF0235 protein HAPS_1504 (97 aa).

Belongs to the UPF0235 family.

The protein is UPF0235 protein HAPS_1504 of Glaesserella parasuis serovar 5 (strain SH0165) (Haemophilus parasuis).